The following is a 192-amino-acid chain: Pyridoxine/pyridoxamine 5'-phosphate oxidase (192 aa).

Residues 41–46, 56–57, R62, K63, and Q85 each bind FMN; these read RMMLLK and FT. K46 is a substrate binding site. Substrate is bound by residues Y103, R107, and S111. Residues 120 to 121 and W165 contribute to the FMN site; that span reads QS. Position 171 to 173 (171 to 173) interacts with substrate; it reads RLH. R175 lines the FMN pocket.

This sequence belongs to the pyridoxamine 5'-phosphate oxidase family. As to quaternary structure, homodimer. The cofactor is FMN.

The enzyme catalyses pyridoxamine 5'-phosphate + O2 + H2O = pyridoxal 5'-phosphate + H2O2 + NH4(+). It catalyses the reaction pyridoxine 5'-phosphate + O2 = pyridoxal 5'-phosphate + H2O2. It participates in cofactor metabolism; pyridoxal 5'-phosphate salvage; pyridoxal 5'-phosphate from pyridoxamine 5'-phosphate: step 1/1. Its pathway is cofactor metabolism; pyridoxal 5'-phosphate salvage; pyridoxal 5'-phosphate from pyridoxine 5'-phosphate: step 1/1. Functionally, catalyzes the oxidation of either pyridoxine 5'-phosphate (PNP) or pyridoxamine 5'-phosphate (PMP) into pyridoxal 5'-phosphate (PLP). This Zymomonas mobilis subsp. mobilis (strain ATCC 31821 / ZM4 / CP4) protein is Pyridoxine/pyridoxamine 5'-phosphate oxidase.